The primary structure comprises 96 residues: Aspartyl/glutamyl-tRNA(Asn/Gln) amidotransferase subunit C (96 aa).

This sequence belongs to the GatC family. Heterotrimer of A, B and C subunits.

The catalysed reaction is L-glutamyl-tRNA(Gln) + L-glutamine + ATP + H2O = L-glutaminyl-tRNA(Gln) + L-glutamate + ADP + phosphate + H(+). It catalyses the reaction L-aspartyl-tRNA(Asn) + L-glutamine + ATP + H2O = L-asparaginyl-tRNA(Asn) + L-glutamate + ADP + phosphate + 2 H(+). Its function is as follows. Allows the formation of correctly charged Asn-tRNA(Asn) or Gln-tRNA(Gln) through the transamidation of misacylated Asp-tRNA(Asn) or Glu-tRNA(Gln) in organisms which lack either or both of asparaginyl-tRNA or glutaminyl-tRNA synthetases. The reaction takes place in the presence of glutamine and ATP through an activated phospho-Asp-tRNA(Asn) or phospho-Glu-tRNA(Gln). The sequence is that of Aspartyl/glutamyl-tRNA(Asn/Gln) amidotransferase subunit C from Chloroflexus aurantiacus (strain ATCC 29366 / DSM 635 / J-10-fl).